The sequence spans 471 residues: Pneumolysin (471 aa).

Transmembrane regions (beta stranded) follow at residues 158–171, 178–187, 256–265, and 273–285; these read MEQL…DFEK, IDFNSVHSGE, SDEVEAAFEA, and APQT…LDNT. Residues 427–437 carry the Conserved undecapeptide motif; sequence ECTGLAWEWWR. The Cholesterol binding signature appears at 459–460; that stretch reads TL.

Belongs to the cholesterol-dependent cytolysin family. In terms of assembly, homooligomeric pore complex of 35 to 50 subunits; when inserted in the host membrane. In terms of processing, has a slightly altered apparent molecular weight in a secA2 deletion mutant, but no post-translational modifications have been found.

It localises to the secreted. The protein localises to the cell wall. Its subcellular location is the host cell membrane. Its function is as follows. A cholesterol-dependent toxin that causes cytolysis by forming pores in cholesterol containing host membranes. After binding to target membranes, the protein undergoes a major conformation change, leading to its insertion in the host membrane and formation of an oligomeric pore complex. Cholesterol is required for binding to host membranes, membrane insertion and pore formation; cholesterol binding is mediated by a Thr-Leu pair in the C-terminus. Can be reversibly inactivated by oxidation. This chain is Pneumolysin (ply), found in Streptococcus pneumoniae serotype 4 (strain ATCC BAA-334 / TIGR4).